Here is a 197-residue protein sequence, read N- to C-terminus: UPF0301 protein A2cp1_4106 (197 aa).

This sequence belongs to the UPF0301 (AlgH) family.

This Anaeromyxobacter dehalogenans (strain 2CP-1 / ATCC BAA-258) protein is UPF0301 protein A2cp1_4106.